Reading from the N-terminus, the 273-residue chain is 2,3,4,5-tetrahydropyridine-2,6-dicarboxylate N-succinyltransferase (273 aa).

2 residues coordinate substrate: R104 and D141.

It belongs to the transferase hexapeptide repeat family. As to quaternary structure, homotrimer.

It is found in the cytoplasm. The catalysed reaction is (S)-2,3,4,5-tetrahydrodipicolinate + succinyl-CoA + H2O = (S)-2-succinylamino-6-oxoheptanedioate + CoA. It participates in amino-acid biosynthesis; L-lysine biosynthesis via DAP pathway; LL-2,6-diaminopimelate from (S)-tetrahydrodipicolinate (succinylase route): step 1/3. In Nitrosomonas europaea (strain ATCC 19718 / CIP 103999 / KCTC 2705 / NBRC 14298), this protein is 2,3,4,5-tetrahydropyridine-2,6-dicarboxylate N-succinyltransferase.